The chain runs to 392 residues: Protein RecA (392 aa).

A disordered region spans residues 1-21 (MALETKPAQDPATEIKHELDP). 83-90 (GPESSGKT) contacts ATP. The tract at residues 372–392 (DAAKDTKATAAPAAKSSRAKA) is disordered. Residues 379 to 392 (ATAAPAAKSSRAKA) show a composition bias toward low complexity.

The protein belongs to the RecA family.

The protein localises to the cytoplasm. In terms of biological role, can catalyze the hydrolysis of ATP in the presence of single-stranded DNA, the ATP-dependent uptake of single-stranded DNA by duplex DNA, and the ATP-dependent hybridization of homologous single-stranded DNAs. It interacts with LexA causing its activation and leading to its autocatalytic cleavage. This is Protein RecA from Bifidobacterium breve.